The chain runs to 475 residues: Ribulose bisphosphate carboxylase large chain (475 aa).

Positions 1-2 (MS) are excised as a propeptide. At Pro-3 the chain carries N-acetylproline. Position 14 is an N6,N6,N6-trimethyllysine (Lys-14). Substrate is bound by residues Asn-123 and Thr-173. The active-site Proton acceptor is the Lys-175. Lys-177 contributes to the substrate binding site. Lys-201, Asp-203, and Glu-204 together coordinate Mg(2+). Lys-201 is subject to N6-carboxylysine. His-294 functions as the Proton acceptor in the catalytic mechanism. Residues Arg-295, His-327, and Ser-379 each contribute to the substrate site.

It belongs to the RuBisCO large chain family. Type I subfamily. Heterohexadecamer of 8 large chains and 8 small chains; disulfide-linked. The disulfide link is formed within the large subunit homodimers. It depends on Mg(2+) as a cofactor. The disulfide bond which can form in the large chain dimeric partners within the hexadecamer appears to be associated with oxidative stress and protein turnover.

It is found in the plastid. The protein resides in the chloroplast. The catalysed reaction is 2 (2R)-3-phosphoglycerate + 2 H(+) = D-ribulose 1,5-bisphosphate + CO2 + H2O. It catalyses the reaction D-ribulose 1,5-bisphosphate + O2 = 2-phosphoglycolate + (2R)-3-phosphoglycerate + 2 H(+). Its function is as follows. RuBisCO catalyzes two reactions: the carboxylation of D-ribulose 1,5-bisphosphate, the primary event in carbon dioxide fixation, as well as the oxidative fragmentation of the pentose substrate in the photorespiration process. Both reactions occur simultaneously and in competition at the same active site. The sequence is that of Ribulose bisphosphate carboxylase large chain from Picea sitchensis (Sitka spruce).